Consider the following 273-residue polypeptide: MKKATQSKAWTTVQIARHPERPQFLDYVGEIFTEFDALHGDRLFGDDGAMVGGLARFDGQPVMVIGQHRGRSTREKLKHNFGMCNPEGYRKSQRLLDMAERFNLPVFTFIDTMGAYPGVGAEERGQAEAIATSLAQLSSLKVPVIATVLGEGGSGGALGIGVADRVIMLSHSIYSVISPEGCASILWKTAEKAAQASEALGLTADKLQSLGIVEYVVDEGEGAHLDPERVMQNLKVVLKQALDELLPMDANERCEARYQRLMKFGSENLGVAS.

The CoA carboxyltransferase C-terminal domain occupies 1–244; sequence MKKATQSKAW…KVVLKQALDE (244 aa).

The protein belongs to the AccA family. As to quaternary structure, acetyl-CoA carboxylase is a heterohexamer composed of biotin carboxyl carrier protein (AccB), biotin carboxylase (AccC) and two subunits each of ACCase subunit alpha (AccA) and ACCase subunit beta (AccD).

It localises to the cytoplasm. The enzyme catalyses N(6)-carboxybiotinyl-L-lysyl-[protein] + acetyl-CoA = N(6)-biotinyl-L-lysyl-[protein] + malonyl-CoA. It functions in the pathway lipid metabolism; malonyl-CoA biosynthesis; malonyl-CoA from acetyl-CoA: step 1/1. In terms of biological role, component of the acetyl coenzyme A carboxylase (ACC) complex. First, biotin carboxylase catalyzes the carboxylation of biotin on its carrier protein (BCCP) and then the CO(2) group is transferred by the carboxyltransferase to acetyl-CoA to form malonyl-CoA. In Acinetobacter baumannii (strain ACICU), this protein is Acetyl-coenzyme A carboxylase carboxyl transferase subunit alpha.